The primary structure comprises 1235 residues: Serine/threonine-protein kinase TAO2 (1235 aa).

Phosphoserine is present on S9. The 254-residue stretch at 28–281 (FSDLREIGHG…SEVLLKHRFV (254 aa)) folds into the Protein kinase domain. ATP-binding positions include 34–42 (IGHGSFGAV) and K57. Residue 106-108 (EYC) coordinates staurosporine. The Proton acceptor role is filled by D151. G155 provides a ligand contact to staurosporine. S181 bears the Phosphoserine mark. The disordered stretch occupies residues 318 to 457 (QEAPNGPGAE…PTSTSSSSAR (140 aa)). Over residues 350 to 374 (SSHSVPSMSISASSQSSSVNSLADA) the composition is skewed to low complexity. Over residues 375–395 (SDNEEEEEEEEEEEEEEEEEG) the composition is skewed to acidic residues. Positions 396 to 411 (PESREMAMMQEGEHTV) are enriched in basic and acidic residues. A Phosphoserine modification is found at S416. 2 coiled-coil regions span residues 488-523 (SALR…EEHS) and 576-603 (KELA…LQEN). The residue at position 658 (S658) is a Phosphoserine. A coiled-coil region spans residues 683–715 (LRQHEATRELELRQLQAVQRTRAELTRLQHQTE). Phosphoserine is present on residues S777, S825, and S827. Residues 892–941 (GPVLTPVPEEEEEEEEEGGAPIGTPRDPGDGCPSPDIPPEPPPSHLRQYP) form a disordered region. The segment covering 899 to 909 (PEEEEEEEEEG) has biased composition (acidic residues). A compositionally biased stretch (pro residues) spans 926-935 (PDIPPEPPPS). 3 helical membrane passes run 967-987 (LLPL…GGGL), 989-1009 (AALL…LFLC), and 1014-1034 (LPPS…VLSL). At R1038 the chain carries Phosphoserine. The next 2 helical transmembrane spans lie at 1040 to 1060 (LMGV…SLAL) and 1170 to 1190 (LASC…LLKG). Residues 1210–1235 (SASRQLPPGTVAGRRSQTRRALPPWR) are disordered.

It belongs to the protein kinase superfamily. STE Ser/Thr protein kinase family. STE20 subfamily. In terms of assembly, self-associates. Interacts with MAP2K3 and MAP2K6. Interacts with tubulins. Interacts with MAP3K7 and interferes with MAP3K7-binding to CHUK and thus prevents NF-kappa-B activation. Isoform 2 interacts with PCDH8; this complex may also include CDH2. The cofactor is Mg(2+). In terms of processing, autophosphorylated. Phosphorylated by ATM. Phosphorylated on Ser-1038 by MAPK14. This phosphorylation is required PCDH8 for endocytosis.

Its subcellular location is the cytoplasmic vesicle membrane. The protein resides in the cytoplasm. It is found in the cytoskeleton. It localises to the cell projection. The protein localises to the dendrite. It carries out the reaction L-seryl-[protein] + ATP = O-phospho-L-seryl-[protein] + ADP + H(+). The catalysed reaction is L-threonyl-[protein] + ATP = O-phospho-L-threonyl-[protein] + ADP + H(+). With respect to regulation, moderately inhibited by staurosporine, a broad-range protein kinase inhibitor. In terms of biological role, serine/threonine-protein kinase involved in different processes such as membrane blebbing and apoptotic bodies formation DNA damage response and MAPK14/p38 MAPK stress-activated MAPK cascade. Phosphorylates itself, MBP, activated MAPK8, MAP2K3, MAP2K6 and tubulins. Activates the MAPK14/p38 MAPK signaling pathway through the specific activation and phosphorylation of the upstream MAP2K3 and MAP2K6 kinases. In response to DNA damage, involved in the G2/M transition DNA damage checkpoint by activating the p38/MAPK14 stress-activated MAPK cascade, probably by mediating phosphorylation of upstream MAP2K3 and MAP2K6 kinases. May affect microtubule organization and stability. May play a role in the osmotic stress-MAPK8 pathway. Prevents MAP3K7-mediated activation of CHUK, and thus NF-kappa-B activation. Isoform 2, but not isoform 1, is required for PCDH8 endocytosis. Following homophilic interactions between PCDH8 extracellular domains, isoform 2 phosphorylates and activates MAPK14/p38 MAPK which in turn phosphorylates isoform 2. This process leads to PCDH8 endocytosis and CDH2 cointernalization. Both isoforms are involved in MAPK14/p38 MAPK activation. The polypeptide is Serine/threonine-protein kinase TAO2 (Taok2) (Rattus norvegicus (Rat)).